Here is a 200-residue protein sequence, read N- to C-terminus: Recombination protein RecR (200 aa).

A C4-type zinc finger spans residues Cys58–Cys73. The Toprim domain occupies Gly81 to Ala176.

Belongs to the RecR family.

Functionally, may play a role in DNA repair. It seems to be involved in an RecBC-independent recombinational process of DNA repair. It may act with RecF and RecO. The chain is Recombination protein RecR from Amoebophilus asiaticus (strain 5a2).